The sequence spans 638 residues: 3D-(3,5/4)-trihydroxycyclohexane-1,2-dione hydrolase (638 aa).

Thiamine diphosphate is bound at residue E67. Positions 442 to 523 (SLPGDLQRLW…INIMLFDNSG (82 aa)) are thiamine pyrophosphate binding. Positions 494 and 521 each coordinate Mg(2+).

It belongs to the TPP enzyme family. It depends on Mg(2+) as a cofactor. Requires thiamine diphosphate as cofactor.

It carries out the reaction 3D-3,5/4-trihydroxycyclohexane-1,2-dione + H2O = 5-deoxy-D-glucuronate + H(+). It functions in the pathway polyol metabolism; myo-inositol degradation into acetyl-CoA; acetyl-CoA from myo-inositol: step 3/7. In terms of biological role, involved in the cleavage of the C1-C2 bond of 3D-(3,5/4)-trihydroxycyclohexane-1,2-dione (THcHDO) to yield 5-deoxy-glucuronate (5DG). This chain is 3D-(3,5/4)-trihydroxycyclohexane-1,2-dione hydrolase, found in Listeria monocytogenes serotype 4b (strain F2365).